The chain runs to 374 residues: MIFQTTSEDLRTRARTGILNLNGVKLETPVFMPVGTRGVVKTISADDLEELEYSLILGNTYHLYLRPGTAVLERFGGLKKFSTWKRALLTDSGGYQVFSLNSLFKYEQDGVRFQSHIDGSRHYFTPNSVIDIQRTIGSDIMMVLDDCAPFDSSQERLRQSLDRTHRWAEMSVEYWEKNKNSSHLFGIFQGGIDLGLRLESLQKIVSLPFDGIAIGGLSVGEPRKDFIRILEGVSAYTDRSRPLYLMGVGTVPDILDGVKNGVDMFDCVLPTRNARNGQVFTSLGKINLRNEKWKSSDVPIDPHCGCKVCKRYSIGYIRHLHHVGELTAFSLSTYHNLYFMKNFLSEIRKSIQAGEFLKIYAKWKNLYEKPEFSG.

The Proton acceptor role is filled by Asp91. Substrate-binding positions include 91-95, Asp145, Gln189, and Gly216; that span reads DSGGY. Positions 247-253 are RNA binding; it reads GVGTVPD. The active-site Nucleophile is the Asp266. The segment at 271-275 is RNA binding; important for wobble base 34 recognition; that stretch reads TRNAR. 4 residues coordinate Zn(2+): Cys304, Cys306, Cys309, and His335.

This sequence belongs to the queuine tRNA-ribosyltransferase family. Homodimer. Within each dimer, one monomer is responsible for RNA recognition and catalysis, while the other monomer binds to the replacement base PreQ1. Zn(2+) is required as a cofactor.

The catalysed reaction is 7-aminomethyl-7-carbaguanine + guanosine(34) in tRNA = 7-aminomethyl-7-carbaguanosine(34) in tRNA + guanine. It participates in tRNA modification; tRNA-queuosine biosynthesis. Catalyzes the base-exchange of a guanine (G) residue with the queuine precursor 7-aminomethyl-7-deazaguanine (PreQ1) at position 34 (anticodon wobble position) in tRNAs with GU(N) anticodons (tRNA-Asp, -Asn, -His and -Tyr). Catalysis occurs through a double-displacement mechanism. The nucleophile active site attacks the C1' of nucleotide 34 to detach the guanine base from the RNA, forming a covalent enzyme-RNA intermediate. The proton acceptor active site deprotonates the incoming PreQ1, allowing a nucleophilic attack on the C1' of the ribose to form the product. After dissociation, two additional enzymatic reactions on the tRNA convert PreQ1 to queuine (Q), resulting in the hypermodified nucleoside queuosine (7-(((4,5-cis-dihydroxy-2-cyclopenten-1-yl)amino)methyl)-7-deazaguanosine). The polypeptide is Queuine tRNA-ribosyltransferase (Leptospira borgpetersenii serovar Hardjo-bovis (strain JB197)).